Reading from the N-terminus, the 434-residue chain is F-box/LRR-repeat protein 21 (434 aa).

Residues 39-85 (LLDWGNLPHHVVLRIFQYLPLIDRARASSVCRRWNEVFHIPDLWRKF) enclose the F-box domain. 6 LRR repeats span residues 187–213 (DTPV…KMSS), 214–239 (CPHV…ALNY), 242–265 (LSDK…RIDV), 322–347 (GRSV…VVCA), 349–374 (GIQV…GLSE), and 375–400 (CEVS…SIME).

As to quaternary structure, part of the SCF (SKP1-CUL1-F-box) E3 ubiquitin-protein ligase complex SCF(FBXL21) composed of CUL1, SKP1, RBX1 and FBXL21. Interacts with CRY1 and CRY2.

It localises to the cytoplasm. The protein resides in the cytosol. The protein localises to the nucleus. It functions in the pathway protein modification; protein ubiquitination. Functionally, substrate-recognition component of the SCF(FBXL21) E3 ubiquitin ligase complex involved in circadian rhythm function. Plays a key role in the maintenance of both the speed and the robustness of the circadian clock oscillation. The SCF(FBXL21) complex mainly acts in the cytosol and mediates ubiquitination of CRY proteins (CRY1 and CRY2), leading to CRY proteins stabilization. The SCF(FBXL21) complex counteracts the activity of the SCF(FBXL3) complex and protects CRY proteins from degradation. Involved in the hypothalamic suprachiasmatic nucleus (SCN) clock regulating temporal organization of the daily activities. The chain is F-box/LRR-repeat protein 21 (FBXL21) from Bos taurus (Bovine).